A 278-amino-acid polypeptide reads, in one-letter code: Sulfur carrier protein FdhD (278 aa).

Cys-113 functions as the Cysteine persulfide intermediate in the catalytic mechanism. Mo-bis(molybdopterin guanine dinucleotide) is bound at residue 251–256 (FCRNGR).

The protein belongs to the FdhD family.

The protein resides in the cytoplasm. Required for formate dehydrogenase (FDH) activity. Acts as a sulfur carrier protein that transfers sulfur from IscS to the molybdenum cofactor prior to its insertion into FDH. This chain is Sulfur carrier protein FdhD, found in Shewanella oneidensis (strain ATCC 700550 / JCM 31522 / CIP 106686 / LMG 19005 / NCIMB 14063 / MR-1).